The chain runs to 224 residues: Putative adhesin RMA_1308 (224 aa).

Positions 1-22 (MQKLLLIAATSATILSSSLSFA) are cleaved as a signal peptide.

The protein is Putative adhesin RMA_1308 of Rickettsia massiliae (strain Mtu5).